We begin with the raw amino-acid sequence, 798 residues long: Phenylalanine--tRNA ligase beta subunit (798 aa).

The tRNA-binding domain maps to 39–147 (AARLAGFTLA…PSGEVGERFI (109 aa)). Residues 404 to 475 (DHSRAYKLDA…RIASLTKLVG (72 aa)) form the B5 domain. Residues Asp453, Asp459, Glu462, and Glu463 each coordinate Mg(2+). The FDX-ACB domain occupies 704–797 (RDLQAVERDF…VAKATGGTLR (94 aa)).

Belongs to the phenylalanyl-tRNA synthetase beta subunit family. Type 1 subfamily. As to quaternary structure, tetramer of two alpha and two beta subunits. Mg(2+) is required as a cofactor.

It localises to the cytoplasm. It catalyses the reaction tRNA(Phe) + L-phenylalanine + ATP = L-phenylalanyl-tRNA(Phe) + AMP + diphosphate + H(+). The chain is Phenylalanine--tRNA ligase beta subunit from Ruegeria pomeroyi (strain ATCC 700808 / DSM 15171 / DSS-3) (Silicibacter pomeroyi).